Reading from the N-terminus, the 550-residue chain is Glutamine--tRNA ligase (550 aa).

The short motif at 34-44 (PEPNGYLHLGH) is the 'HIGH' region element. ATP is bound by residues 35–37 (EPN) and 41–47 (HLGHAKS). Residues Asp-67 and Tyr-212 each coordinate L-glutamine. Residues Thr-231, 261–262 (RL), and 269–271 (LSK) each bind ATP. A 'KMSKS' region motif is present at residues 268 to 272 (VLSKR).

The protein belongs to the class-I aminoacyl-tRNA synthetase family. In terms of assembly, monomer.

It localises to the cytoplasm. The catalysed reaction is tRNA(Gln) + L-glutamine + ATP = L-glutaminyl-tRNA(Gln) + AMP + diphosphate. In Buchnera aphidicola subsp. Baizongia pistaciae (strain Bp), this protein is Glutamine--tRNA ligase.